The primary structure comprises 438 residues: Aspartate aminotransferase, cytoplasmic (438 aa).

3 residues coordinate L-aspartate: Gly-73, Trp-167, and Asn-220. Lys-284 is modified (N6-(pyridoxal phosphate)lysine). Residue Arg-412 coordinates L-aspartate.

The protein belongs to the class-I pyridoxal-phosphate-dependent aminotransferase family. In terms of assembly, homodimer. Pyridoxal 5'-phosphate is required as a cofactor.

Its subcellular location is the cytoplasm. It carries out the reaction L-aspartate + 2-oxoglutarate = oxaloacetate + L-glutamate. Functionally, plays a key role in amino acid metabolism. The protein is Aspartate aminotransferase, cytoplasmic (aatB) of Dictyostelium discoideum (Social amoeba).